A 279-amino-acid chain; its full sequence is Large ribosomal subunit protein uL2 (279 aa).

2 disordered regions span residues 31–61 (KSLL…HKRH) and 222–279 (GMAM…RNAK). Over residues 49–61 (KTSRHRGGGHKRH) the composition is skewed to basic residues. Positions 232-242 (MGGGEGKSKSG) are enriched in gly residues. The segment covering 259 to 268 (LKTRNRKKAS) has biased composition (basic residues).

This sequence belongs to the universal ribosomal protein uL2 family. In terms of assembly, part of the 50S ribosomal subunit. Forms a bridge to the 30S subunit in the 70S ribosome.

Its function is as follows. One of the primary rRNA binding proteins. Required for association of the 30S and 50S subunits to form the 70S ribosome, for tRNA binding and peptide bond formation. It has been suggested to have peptidyltransferase activity; this is somewhat controversial. Makes several contacts with the 16S rRNA in the 70S ribosome. In Chlorobium chlorochromatii (strain CaD3), this protein is Large ribosomal subunit protein uL2.